The chain runs to 431 residues: Mannan endo-1,4-beta-mannosidase 5 (431 aa).

A signal peptide spans 1–24 (MVPTRNRPMLRILGFFICAAFIYL). N-linked (GlcNAc...) asparagine glycosylation is present at Asn-45. Substrate is bound at residue Trp-97. Asn-168 is a glycosylation site (N-linked (GlcNAc...) asparagine). Residue Asn-213 participates in substrate binding. Glu-214 acts as the Proton donor in catalysis. N-linked (GlcNAc...) asparagine glycosylation occurs at Asn-282. Tyr-294 provides a ligand contact to substrate. The N-linked (GlcNAc...) asparagine glycan is linked to Asn-301. Glu-334 serves as the catalytic Nucleophile. Residue Trp-376 participates in substrate binding.

It belongs to the glycosyl hydrolase 5 (cellulase A) family. In terms of tissue distribution, expressed in stems.

The protein localises to the secreted. The enzyme catalyses Random hydrolysis of (1-&gt;4)-beta-D-mannosidic linkages in mannans, galactomannans and glucomannans.. In Arabidopsis thaliana (Mouse-ear cress), this protein is Mannan endo-1,4-beta-mannosidase 5 (MAN5).